The chain runs to 439 residues: L-cysteine:1D-myo-inositol 2-amino-2-deoxy-alpha-D-glucopyranoside ligase 2 (439 aa).

Cysteine 60 contacts Zn(2+). Residues 60 to 63 (CGIT), threonine 75, and 98 to 100 (NVT) each bind L-cysteinyl-5'-AMP. The 'HIGH' region motif lies at 62–72 (ITPYDSTHLGH). A 'ERGGDP' region motif is present at residues 203-208 (ERGGDP). Tryptophan 243 provides a ligand contact to L-cysteinyl-5'-AMP. Cysteine 247 contributes to the Zn(2+) binding site. 265-267 (GVD) lines the L-cysteinyl-5'-AMP pocket. Zn(2+) is bound at residue histidine 272. Isoleucine 299 contributes to the L-cysteinyl-5'-AMP binding site. A 'KMSKS' region motif is present at residues 305 to 309 (KMSKS).

Belongs to the class-I aminoacyl-tRNA synthetase family. MshC subfamily. In terms of assembly, monomer. Zn(2+) is required as a cofactor.

It catalyses the reaction 1D-myo-inositol 2-amino-2-deoxy-alpha-D-glucopyranoside + L-cysteine + ATP = 1D-myo-inositol 2-(L-cysteinylamino)-2-deoxy-alpha-D-glucopyranoside + AMP + diphosphate + H(+). Functionally, catalyzes the ATP-dependent condensation of GlcN-Ins and L-cysteine to form L-Cys-GlcN-Ins. In Corynebacterium urealyticum (strain ATCC 43042 / DSM 7109), this protein is L-cysteine:1D-myo-inositol 2-amino-2-deoxy-alpha-D-glucopyranoside ligase 2.